Here is a 463-residue protein sequence, read N- to C-terminus: Glutamate--tRNA ligase 1 (463 aa).

Positions 10-20 (PSPTGYLHIGG) match the 'HIGH' region motif. A 'KMSKS' region motif is present at residues 238-242 (KLSKR). ATP is bound at residue Lys241.

This sequence belongs to the class-I aminoacyl-tRNA synthetase family. Glutamate--tRNA ligase type 1 subfamily. Monomer.

It is found in the cytoplasm. It carries out the reaction tRNA(Glu) + L-glutamate + ATP = L-glutamyl-tRNA(Glu) + AMP + diphosphate. Its function is as follows. Catalyzes the attachment of glutamate to tRNA(Glu) in a two-step reaction: glutamate is first activated by ATP to form Glu-AMP and then transferred to the acceptor end of tRNA(Glu). In Helicobacter pylori (strain J99 / ATCC 700824) (Campylobacter pylori J99), this protein is Glutamate--tRNA ligase 1.